The chain runs to 344 residues: Phosphoribosylformylglycinamidine cyclo-ligase (344 aa).

The protein belongs to the AIR synthase family.

The protein localises to the cytoplasm. The catalysed reaction is 2-formamido-N(1)-(5-O-phospho-beta-D-ribosyl)acetamidine + ATP = 5-amino-1-(5-phospho-beta-D-ribosyl)imidazole + ADP + phosphate + H(+). It participates in purine metabolism; IMP biosynthesis via de novo pathway; 5-amino-1-(5-phospho-D-ribosyl)imidazole from N(2)-formyl-N(1)-(5-phospho-D-ribosyl)glycinamide: step 2/2. The protein is Phosphoribosylformylglycinamidine cyclo-ligase of Synechococcus sp. (strain RCC307).